Consider the following 617-residue polypeptide: Membrane protein insertase YidC (617 aa).

A helical membrane pass occupies residues 8 to 28 (MFVAIGLSLLVLLGWQYFVAG). Positions 36–49 (QIEAQNKAAQQQPP) are enriched in polar residues. The tract at residues 36–91 (QIEAQNKAAQQQPPGVTPDGVPSPSPKEGGPAAPAPGTLPTAQGGPVSREAALARS) is disordered. A compositionally biased stretch (low complexity) spans 61 to 81 (PKEGGPAAPAPGTLPTAQGGP). The next 4 membrane-spanning stretches (helical) occupy residues 387 to 407 (LFGN…LLFL), 461 to 481 (WPVL…FITI), 517 to 533 (FVHL…TMFV), and 549 to 569 (IFTF…AGLV).

It belongs to the OXA1/ALB3/YidC family. Type 1 subfamily. Interacts with the Sec translocase complex via SecD. Specifically interacts with transmembrane segments of nascent integral membrane proteins during membrane integration.

The protein resides in the cell inner membrane. Functionally, required for the insertion and/or proper folding and/or complex formation of integral membrane proteins into the membrane. Involved in integration of membrane proteins that insert both dependently and independently of the Sec translocase complex, as well as at least some lipoproteins. Aids folding of multispanning membrane proteins. The protein is Membrane protein insertase YidC of Methylobacterium radiotolerans (strain ATCC 27329 / DSM 1819 / JCM 2831 / NBRC 15690 / NCIMB 10815 / 0-1).